We begin with the raw amino-acid sequence, 282 residues long: Bifunctional protein FolD (282 aa).

NADP(+)-binding positions include 165 to 167 (NRS), Ser190, and Ile231.

Belongs to the tetrahydrofolate dehydrogenase/cyclohydrolase family. Homodimer.

It catalyses the reaction (6R)-5,10-methylene-5,6,7,8-tetrahydrofolate + NADP(+) = (6R)-5,10-methenyltetrahydrofolate + NADPH. It carries out the reaction (6R)-5,10-methenyltetrahydrofolate + H2O = (6R)-10-formyltetrahydrofolate + H(+). It functions in the pathway one-carbon metabolism; tetrahydrofolate interconversion. Functionally, catalyzes the oxidation of 5,10-methylenetetrahydrofolate to 5,10-methenyltetrahydrofolate and then the hydrolysis of 5,10-methenyltetrahydrofolate to 10-formyltetrahydrofolate. In Clostridium botulinum (strain Langeland / NCTC 10281 / Type F), this protein is Bifunctional protein FolD.